A 283-amino-acid polypeptide reads, in one-letter code: Acetylglutamate kinase (283 aa).

Substrate is bound by residues 64–65 (GG), R86, and N181.

This sequence belongs to the acetylglutamate kinase family. ArgB subfamily.

The protein localises to the cytoplasm. The catalysed reaction is N-acetyl-L-glutamate + ATP = N-acetyl-L-glutamyl 5-phosphate + ADP. It functions in the pathway amino-acid biosynthesis; L-arginine biosynthesis; N(2)-acetyl-L-ornithine from L-glutamate: step 2/4. Its function is as follows. Catalyzes the ATP-dependent phosphorylation of N-acetyl-L-glutamate. The sequence is that of Acetylglutamate kinase from Sulfurimonas denitrificans (strain ATCC 33889 / DSM 1251) (Thiomicrospira denitrificans (strain ATCC 33889 / DSM 1251)).